We begin with the raw amino-acid sequence, 97 residues long: Protein YukE (97 aa).

Residues 21–94 are a coiled coil; sequence VESQEVLNQV…ESTDQDIANQ (74 aa).

This sequence belongs to the WXG100 family. sagEsxA-like subfamily. Homodimer.

The protein resides in the secreted. Its function is as follows. Required to deliver LXG toxins to target cells. The sequence is that of Protein YukE (yukE) from Bacillus subtilis (strain 168).